The primary structure comprises 446 residues: Glutamate-1-semialdehyde 2,1-aminomutase (446 aa).

An N6-(pyridoxal phosphate)lysine modification is found at lysine 263.

Belongs to the class-III pyridoxal-phosphate-dependent aminotransferase family. HemL subfamily. Pyridoxal 5'-phosphate is required as a cofactor.

Its subcellular location is the cytoplasm. The catalysed reaction is (S)-4-amino-5-oxopentanoate = 5-aminolevulinate. It functions in the pathway porphyrin-containing compound metabolism; protoporphyrin-IX biosynthesis; 5-aminolevulinate from L-glutamyl-tRNA(Glu): step 2/2. In Haloquadratum walsbyi (strain DSM 16790 / HBSQ001), this protein is Glutamate-1-semialdehyde 2,1-aminomutase.